The following is a 547-amino-acid chain: Chaperonin GroEL (547 aa).

Residues 30–33 (TLGP), Lys-51, 87–91 (DGTTT), Gly-416, 480–482 (NAA), and Asp-496 each bind ATP.

Belongs to the chaperonin (HSP60) family. As to quaternary structure, forms a cylinder of 14 subunits composed of two heptameric rings stacked back-to-back. Interacts with the co-chaperonin GroES.

It is found in the cytoplasm. It carries out the reaction ATP + H2O + a folded polypeptide = ADP + phosphate + an unfolded polypeptide.. Its function is as follows. Together with its co-chaperonin GroES, plays an essential role in assisting protein folding. The GroEL-GroES system forms a nano-cage that allows encapsulation of the non-native substrate proteins and provides a physical environment optimized to promote and accelerate protein folding. This chain is Chaperonin GroEL, found in Pseudoalteromonas translucida (strain TAC 125).